The following is an 82-amino-acid chain: Small ribosomal subunit protein bS16 (82 aa).

The protein belongs to the bacterial ribosomal protein bS16 family.

This is Small ribosomal subunit protein bS16 from Marinomonas sp. (strain MWYL1).